A 510-amino-acid polypeptide reads, in one-letter code: Replication factor C large subunit (510 aa).

48–55 provides a ligand contact to ATP; that stretch reads GPPGTGKT. Positions 459-510 are disordered; sequence MESMLERKREESEVEEEAKEIEEAVEKAEEEEEREEKKKEGGGEQRTLDAFF. The span at 493-510 shows a compositional bias: basic and acidic residues; it reads EEKKKEGGGEQRTLDAFF.

This sequence belongs to the activator 1 small subunits family. RfcL subfamily. In terms of assembly, heteromultimer composed of small subunits (RfcS) and large subunits (RfcL).

Functionally, part of the RFC clamp loader complex which loads the PCNA sliding clamp onto DNA. The polypeptide is Replication factor C large subunit (Methanopyrus kandleri (strain AV19 / DSM 6324 / JCM 9639 / NBRC 100938)).